We begin with the raw amino-acid sequence, 215 residues long: MKLYIYDHCPYCLKARMIFGLKNIPVELHVLLNDDAETPTRMVGQKQVPILQKDDSRYMPESMDIVHYVDKLDGKPLLTGKRSPAIEEWLRKVNGYANKLLLPRFAKSAFDEFSTPAARKYFVDKKEASAGNFADLLAHSDGLIKNISDDLRALDKLIVKPNAVNGELSEDDIQLFPLLRNLTLVAGINWPSRVADYRDNMAKQTQINLLSSMAI.

A GST N-terminal domain is found at 1–77 (MKLYIYDHCP…YVDKLDGKPL (77 aa)). C9 and C12 are joined by a disulfide.

This sequence belongs to the glutaredoxin family.

Its function is as follows. Involved in reducing some disulfides in a coupled system with glutathione reductase. Does not act as hydrogen donor for ribonucleotide reductase. In Escherichia coli O157:H7, this protein is Glutaredoxin 2 (grxB).